The chain runs to 382 residues: Bifunctional enzyme IspD/IspF (382 aa).

The interval 1-225 is 2-C-methyl-D-erythritol 4-phosphate cytidylyltransferase; that stretch reads MTGKPSIAAL…AEERMAMISR (225 aa). Residues 225–382 form a 2-C-methyl-D-erythritol 2,4-cyclodiphosphate synthase region; sequence RTAMGFDVHG…AVATVRVPSI (158 aa). Residues aspartate 231 and histidine 233 each coordinate a divalent metal cation. Residues 231–233 and 257–258 contribute to the 4-CDP-2-C-methyl-D-erythritol 2-phosphate site; these read DVH and HS. Histidine 265 provides a ligand contact to a divalent metal cation. 4-CDP-2-C-methyl-D-erythritol 2-phosphate is bound by residues 279–281, 355–358, phenylalanine 362, and arginine 365; these read DIG and TTTE.

In the N-terminal section; belongs to the IspD/TarI cytidylyltransferase family. IspD subfamily. It in the C-terminal section; belongs to the IspF family. A divalent metal cation serves as cofactor.

The catalysed reaction is 2-C-methyl-D-erythritol 4-phosphate + CTP + H(+) = 4-CDP-2-C-methyl-D-erythritol + diphosphate. It carries out the reaction 4-CDP-2-C-methyl-D-erythritol 2-phosphate = 2-C-methyl-D-erythritol 2,4-cyclic diphosphate + CMP. It participates in isoprenoid biosynthesis; isopentenyl diphosphate biosynthesis via DXP pathway; isopentenyl diphosphate from 1-deoxy-D-xylulose 5-phosphate: step 2/6. Its pathway is isoprenoid biosynthesis; isopentenyl diphosphate biosynthesis via DXP pathway; isopentenyl diphosphate from 1-deoxy-D-xylulose 5-phosphate: step 4/6. Bifunctional enzyme that catalyzes the formation of 4-diphosphocytidyl-2-C-methyl-D-erythritol from CTP and 2-C-methyl-D-erythritol 4-phosphate (MEP) (IspD), and catalyzes the conversion of 4-diphosphocytidyl-2-C-methyl-D-erythritol 2-phosphate (CDP-ME2P) to 2-C-methyl-D-erythritol 2,4-cyclodiphosphate (ME-CPP) with a corresponding release of cytidine 5-monophosphate (CMP) (IspF). The protein is Bifunctional enzyme IspD/IspF of Rhizorhabdus wittichii (strain DSM 6014 / CCUG 31198 / JCM 15750 / NBRC 105917 / EY 4224 / RW1) (Sphingomonas wittichii).